The sequence spans 359 residues: Ribosome biogenesis protein BRX1 homolog (359 aa).

The span at 1 to 12 (MGRKFQNKKKKA) shows a compositional bias: basic residues. The disordered stretch occupies residues 1-42 (MGRKFQNKKKKAAPQLEIVPLDENPPLPPQRSSDDVVPKKAR). A Brix domain is found at 50 to 241 (QRVLVFSARG…PVKIFDGSFT (192 aa)).

This sequence belongs to the BRX1 family.

Its subcellular location is the nucleus. It localises to the nucleolus. Required for biogenesis of the 60S ribosomal subunit. In Drosophila melanogaster (Fruit fly), this protein is Ribosome biogenesis protein BRX1 homolog.